The following is a 494-amino-acid chain: Arp2/3 complex-activating protein rickA (494 aa).

The tract at residues 312–494 (PLENNIPPPP…RNSQKPSFVR (183 aa)) is disordered. Over residues 317 to 357 (IPPPPPPPPPLPDNNIPPPPPPPPPLPDNNIPPPPPPPPMA) the composition is skewed to pro residues. The 18-residue stretch at 383 to 400 (DTSDLMREIAGPKKLKKV) folds into the WH2 domain. Residues 421-454 (VNKPSGLESIFARRVAIEMSDSSSSESDSGNWSD) are central and acidic domains. A compositionally biased stretch (low complexity) spans 440-456 (SDSSSSESDSGNWSDVS). Positions 477-494 (THAQKINNRNSQKPSFVR) are enriched in polar residues.

It is found in the cell surface. Functionally, recruits and activates the Arp2/3 complex, which in turn leads to actin polymerization, promoting Rickettsia motility during infection. The sequence is that of Arp2/3 complex-activating protein rickA (rickA) from Rickettsia rickettsii.